Here is a 282-residue protein sequence, read N- to C-terminus: Pantothenate synthetase (282 aa).

Residue methionine 30–histidine 37 coordinates ATP. Histidine 37 functions as the Proton donor in the catalytic mechanism. Glutamine 61 is a (R)-pantoate binding site. Beta-alanine is bound at residue glutamine 61. Position 149–152 (glycine 149–aspartate 152) interacts with ATP. Glutamine 155 is a binding site for (R)-pantoate. Residues isoleucine 178 and methionine 186–arginine 189 contribute to the ATP site.

This sequence belongs to the pantothenate synthetase family. As to quaternary structure, homodimer.

Its subcellular location is the cytoplasm. It carries out the reaction (R)-pantoate + beta-alanine + ATP = (R)-pantothenate + AMP + diphosphate + H(+). The protein operates within cofactor biosynthesis; (R)-pantothenate biosynthesis; (R)-pantothenate from (R)-pantoate and beta-alanine: step 1/1. Its function is as follows. Catalyzes the condensation of pantoate with beta-alanine in an ATP-dependent reaction via a pantoyl-adenylate intermediate. This Shewanella loihica (strain ATCC BAA-1088 / PV-4) protein is Pantothenate synthetase.